The sequence spans 782 residues: Chondroitin proteoglycan 4 (782 aa).

The signal sequence occupies residues 1 to 18 (MRLVYSLIFLLFIPFSHP). N-linked (GlcNAc...) asparagine glycans are attached at residues Asn-76, Asn-208, Asn-462, Asn-468, Asn-474, and Asn-503. The segment at 513 to 726 (ISEKSTEESS…EDQGSGNYKK (214 aa)) is disordered. Composition is skewed to low complexity over residues 520–532 (ESSG…SGDG), 548–566 (SGSS…SSGE), 573–612 (SSGS…SSDT), 662–672 (FGESSGSSGES), and 688–722 (SGSS…QGSG). Asn-559 carries an N-linked (GlcNAc...) asparagine glycan. Ser-691 carries O-linked (Xyl...) (chondroitin sulfate) serine glycosylation. N-linked (GlcNAc...) asparagine glycosylation occurs at Asn-699. Ser-701, Ser-704, Ser-708, Ser-714, and Ser-721 each carry an O-linked (Xyl...) (chondroitin sulfate) serine glycan. Residue Asn-743 is glycosylated (N-linked (GlcNAc...) asparagine).

The polypeptide is Chondroitin proteoglycan 4 (Caenorhabditis elegans).